The chain runs to 469 residues: MSAVNTPAGFTDFKVADISLAAWGRRETIIAESEMPALMGLRRKYLAEQPLKGAKILGCIHMTIQTAVLIETLVALGAEVRWSSCNIFSTQDQAAASIAAAGIPVFAWKGETEEEYEWCLEQTILKDGQPWDANMILDDGGDLTELLHKKYPAVLDRVHGVTEETTTGVHRLLDMLAKGELKVPAINVNDSVTKSKNDNKYGCRHSLSDAIKRGTDHLLSGKQALVIGYGDVGKGSAQSLRQEGMIVKVTEVDPICAMQACMDGFELVSPFIDGINDGTEASIDKALLGKIDLIVTTTGNVNVCDANMLKALKKRAVVCNIGHFDNEIDTAFMRKNWAWEEVKPQVHKIHRTGAGDFDPQNDDYLILLAEGRLVNLGNATGHPSRIMDGSFANQVLAQIFLFEQKFADLSAEKKAERLTVEVLPKKLDEEVALEMVRGFGGVVTKLTQQQADYIGVTVEGPFKPHAYRY.

Residues T63, D139, and E164 each coordinate substrate. 165–167 (TTT) provides a ligand contact to NAD(+). Residues K194 and D198 each coordinate substrate. Residues N199, 228 to 233 (GYGDVG), E251, N300, 321 to 323 (IGH), and N375 each bind NAD(+).

It belongs to the adenosylhomocysteinase family. NAD(+) is required as a cofactor.

It localises to the cytoplasm. It carries out the reaction S-adenosyl-L-homocysteine + H2O = L-homocysteine + adenosine. Its pathway is amino-acid biosynthesis; L-homocysteine biosynthesis; L-homocysteine from S-adenosyl-L-homocysteine: step 1/1. May play a key role in the regulation of the intracellular concentration of adenosylhomocysteine. This chain is Adenosylhomocysteinase, found in Pseudomonas putida (strain W619).